Here is a 144-residue protein sequence, read N- to C-terminus: Putative pre-16S rRNA nuclease (144 aa).

It belongs to the YqgF nuclease family.

Its subcellular location is the cytoplasm. Functionally, could be a nuclease involved in processing of the 5'-end of pre-16S rRNA. The polypeptide is Putative pre-16S rRNA nuclease (Ralstonia nicotianae (strain ATCC BAA-1114 / GMI1000) (Ralstonia solanacearum)).